The sequence spans 169 residues: Cell division inhibitor SulA (169 aa).

A ftsZ binding region spans residues 106 to 112 (ALRTGNY). The interval 162 to 169 (KIHSNLYH) is lon protease binding.

It belongs to the SulA family. In terms of assembly, interacts with FtsZ. Post-translationally, is rapidly cleaved and degraded by the Lon protease once DNA damage is repaired.

Functionally, component of the SOS system and an inhibitor of cell division. Accumulation of SulA causes rapid cessation of cell division and the appearance of long, non-septate filaments. In the presence of GTP, binds a polymerization-competent form of FtsZ in a 1:1 ratio, thus inhibiting FtsZ polymerization and therefore preventing it from participating in the assembly of the Z ring. This mechanism prevents the premature segregation of damaged DNA to daughter cells during cell division. The protein is Cell division inhibitor SulA of Shigella boydii serotype 4 (strain Sb227).